The primary structure comprises 940 residues: Serine/threonine-protein phosphatase 1 regulatory subunit 10 (940 aa).

Residues 1 to 348 form an interaction with TOX4 region; that stretch reads MGSGPIDPKE…EPAPPSEAME (348 aa). In terms of domain architecture, TFIIS N-terminal spans 73-147; it reads KLLNNWLTYS…SDWMAVIRSQ (75 aa). Disordered regions lie at residues 147–210, 248–270, 304–400, and 534–557; these read QSST…KFRS, NVAA…NTTP, KIKK…KSVT, and VETL…LPPV. 2 stretches are compositionally biased toward basic and acidic residues: residues 153 to 166 and 174 to 196; these read AEKD…EGKS and PLTE…EKPK. Residue Lys179 forms a Glycyl lysine isopeptide (Lys-Gly) (interchain with G-Cter in SUMO2) linkage. Position 256 is a phosphothreonine (Thr256). Lys262 is covalently cross-linked (Glycyl lysine isopeptide (Lys-Gly) (interchain with G-Cter in SUMO2)). At Ser313 the chain carries Phosphoserine. Residues 325–336 are compositionally biased toward low complexity; sequence KTSTEPSTAKPS. Positions 357 to 433 are necessary for interaction with PPP1CA; that stretch reads PPVEVPELMD…NKIKDFGEAA (77 aa). Ser382 is subject to Phosphoserine. The segment at 393-408 is necessary for interaction with PPP1CC; the sequence is GRKRKSVTWPEEGKLR. Residues 394–423 carry the PP1-binding motif motif; the sequence is RKRKSVTWPEEGKLREYFYFELDETERVNV. Position 398 is a phosphoserine; by PKA (Ser398). The tract at residues 418 to 619 is interaction with WDR82; the sequence is TERVNVNKIK…IKQMLVPHGL (202 aa). Over residues 540–551 the composition is skewed to gly residues; the sequence is GGSGGSPDGAGG. Residues Ser545 and Ser591 each carry the phosphoserine modification. The disordered stretch occupies residues 617-905; that stretch reads HGLLGPGPIA…HDGGHSHGGD (289 aa). Residues 644–655 are compositionally biased toward pro residues; sequence PPGPGGPMPGPH. Arg665 is modified (omega-N-methylarginine). Low complexity predominate over residues 676-690; it reads GDPFWDGPGDPMRGG. Arg693 and Arg738 each carry omega-N-methylarginine. 2 stretches are compositionally biased toward gly residues: residues 725–763 and 789–844; these read ARGG…GMGN and GSMG…GSGG. Basic and acidic residues-rich tracts occupy residues 861-886 and 894-903; these read PHDV…HDGP and RGHDGGHSHG. The C3H1-type zinc finger occupies 906 to 934; that stretch reads MSNRPVCRHFMMKGNCRYENNCAFYHPGV.

In terms of assembly, component of the PNUTS-PP1 complex (also named PTW/PP1 complex), composed of PPP1R10/PNUTS, TOX4, WDR82, and PPP1CA (or PPP1CB or PPP1CC). Post-translationally, phosphorylated on Ser-398 by PKA within the region necessary for interaction with PPP1CA.

It localises to the nucleus. It is found in the chromosome. In terms of biological role, substrate-recognition component of the PNUTS-PP1 protein phosphatase complex, a protein phosphatase 1 (PP1) complex that promotes RNA polymerase II transcription pause-release, allowing transcription elongation. Promoter-proximal pausing by RNA polymerase II is a transcription halt following transcription initiation but prior to elongation, which acts as a checkpoint to control that transcripts are favorably configured for transcriptional elongation. The PNUTS-PP1 complex mediates the release of RNA polymerase II from promoter-proximal region of genes by catalyzing dephosphorylation of proteins involved in transcription, such as AFF4, CDK9, MEPCE, INTS12, NCBP1, POLR2M/GDOWN1 and SUPT6H. The PNUTS-PP1 complex also regulates RNA polymerase II transcription termination by mediating dephosphorylation of SUPT5H in termination zones downstream of poly(A) sites, thereby promoting deceleration of RNA polymerase II transcription. PNUTS-PP1 complex is also involved in the response to replication stress by mediating dephosphorylation of POLR2A at 'Ser-5' of the CTD, promoting RNA polymerase II degradation. The PNUTS-PP1 complex also plays a role in the control of chromatin structure and cell cycle progression during the transition from mitosis into interphase. PNUTS-PP1 complex mediates dephosphorylation of MYC, promoting MYC stability by preventing MYC ubiquitination by the SCF(FBXW7) complex. In addition to acts as a substrate-recognition component, PPP1R10/PNUTS also acts as a nuclear targeting subunit for the PNUTS-PP1 complex. In some context, PPP1R10/PNUTS also acts as an inhibitor of protein phosphatase 1 (PP1) activity by preventing access to substrates, such as RB. The polypeptide is Serine/threonine-protein phosphatase 1 regulatory subunit 10 (PPP1R10) (Pan troglodytes (Chimpanzee)).